The sequence spans 631 residues: Phosphomethylpyrimidine synthase (631 aa).

Residues Asn-239, Met-268, Tyr-297, His-333, Ser-353–Gly-355, Asp-394–Arg-397, and Glu-433 contribute to the substrate site. His-437 is a Zn(2+) binding site. Tyr-460 serves as a coordination point for substrate. Zn(2+) is bound at residue His-501. Cys-581, Cys-584, and Cys-589 together coordinate [4Fe-4S] cluster.

Belongs to the ThiC family. In terms of assembly, homodimer. [4Fe-4S] cluster is required as a cofactor.

The catalysed reaction is 5-amino-1-(5-phospho-beta-D-ribosyl)imidazole + S-adenosyl-L-methionine = 4-amino-2-methyl-5-(phosphooxymethyl)pyrimidine + CO + 5'-deoxyadenosine + formate + L-methionine + 3 H(+). The protein operates within cofactor biosynthesis; thiamine diphosphate biosynthesis. Functionally, catalyzes the synthesis of the hydroxymethylpyrimidine phosphate (HMP-P) moiety of thiamine from aminoimidazole ribotide (AIR) in a radical S-adenosyl-L-methionine (SAM)-dependent reaction. This Klebsiella pneumoniae (strain 342) protein is Phosphomethylpyrimidine synthase.